The following is an 834-amino-acid chain: Phenylalanine--tRNA ligase beta subunit (834 aa).

Residues 48–159 (GDIERPLVVG…GTAEPGTDAN (112 aa)) form the tRNA-binding domain. The B5 domain maps to 411-492 (PAPEPIRMDI…RLEGLEQIPS (82 aa)). Positions 470, 476, 479, and 480 each coordinate Mg(2+). The FDX-ACB domain maps to 740–833 (SPFPAVLQDV…AADAVGAVLR (94 aa)).

This sequence belongs to the phenylalanyl-tRNA synthetase beta subunit family. Type 1 subfamily. In terms of assembly, tetramer of two alpha and two beta subunits. Mg(2+) is required as a cofactor.

The protein localises to the cytoplasm. The catalysed reaction is tRNA(Phe) + L-phenylalanine + ATP = L-phenylalanyl-tRNA(Phe) + AMP + diphosphate + H(+). The sequence is that of Phenylalanine--tRNA ligase beta subunit from Nocardia farcinica (strain IFM 10152).